The chain runs to 104 residues: NADH-quinone oxidoreductase subunit K (104 aa).

3 helical membrane passes run 4–24, 31–51, and 67–87; these read VPAS…LFGA, VIVL…LVAF, and LFTM…LIAL.

The protein belongs to the complex I subunit 4L family. NDH-1 is composed of 14 different subunits. Subunits NuoA, H, J, K, L, M, N constitute the membrane sector of the complex.

Its subcellular location is the cell membrane. The catalysed reaction is a quinone + NADH + 5 H(+)(in) = a quinol + NAD(+) + 4 H(+)(out). Functionally, NDH-1 shuttles electrons from NADH, via FMN and iron-sulfur (Fe-S) centers, to quinones in the respiratory chain. The immediate electron acceptor for the enzyme in this species is believed to be a menaquinone. Couples the redox reaction to proton translocation (for every two electrons transferred, four hydrogen ions are translocated across the cytoplasmic membrane), and thus conserves the redox energy in a proton gradient. This is NADH-quinone oxidoreductase subunit K from Bacillus cytotoxicus (strain DSM 22905 / CIP 110041 / 391-98 / NVH 391-98).